Reading from the N-terminus, the 776-residue chain is MRTLEDSSGTVLHRLIQEQLRYGNLTETRTLLAIQQQALRGGAGAGGTGSPQASAEILAPEDTQVLQQATRQEPQGQEHQGGESHLAENTLYRLCPQPGKGEELPTYEEAKAHSQYYAAQQAGPRPHVGDRDPRGAPGGHRSQDEALRELRHGHVRSLSERLLQLSLERNGARAPSHMSSSHSFPQLARNQQGPAPRGPPAEGPEPRGPPPQYPHVVLAHETATAVTDPRYRTRGSPHFQHAEVRILQAQVPPVFLQQQQQYQYLQQPQEHPLPPHPAVLSHGPLGALSPPEVEGPASTQTSSAPSGSAHLAQMETLLRENARLQRDNERLQRELESSAEKAGRIEKLEGEIQRLSEAHESLMRASSKREALEKTMRNKMDSEMRRLQDFNRDLRERLESANRRLASKTQEAQAGSQDMVAKLLAQSYEQQQEQEKLEREMALLRGAIEDQRRRAELLEQALSNAQGRAARAEEELRKKQAYVEKVERLQQALGQLQAACEKRELLELRLRTRLEQELKALRAQQRQAGTPTGASGGSPELSALRLSEQLREKEEQILALEADMTKWEQKYLEERAMRQFAMDAAATAAAQRDTTLIRHSPQPSPSSSFNEGLLTGGHRHQEMESRLKVLHAQILEKDAVIKVLQQRSRKDPGKATQGSLRPAKSVPSVFVAAAAGTQGWQSLSSSERPADAPARLATDRAPEEEPVAAAPLPAHAKHGSRDGSTQTDGPTEGASACLGLDPDSLLGYSGGQRTASLDSVAASRVQDLSDMVEILI.

Positions 41–88 (GGAGAGGTGSPQASAEILAPEDTQVLQQATRQEPQGQEHQGGESHLAE) are disordered. Residues 101-307 (GEELPTYEEA…STQTSSAPSG (207 aa)) are required for interaction with CDH5. Residue Tyr-107 is modified to Phosphotyrosine. Disordered stretches follow at residues 119–142 (AQQAGPRPHVGDRDPRGAPGGHRS), 169–215 (RNGA…QYPH), and 283–309 (GPLGALSPPEVEGPASTQTSSAPSGSA). The span at 177–192 (HMSSSHSFPQLARNQQ) shows a compositional bias: polar residues. Positions 196-213 (PRGPPAEGPEPRGPPPQY) are enriched in pro residues. The interval 220–307 (HETATAVTDP…STQTSSAPSG (88 aa)) is required for interaction with CDH1. A compositionally biased stretch (polar residues) spans 297 to 306 (ASTQTSSAPS). Coiled coils occupy residues 314-509 (METL…LELR) and 543-570 (ALRLSEQLREKEEQILALEADMTKWEQK). Glycyl lysine isopeptide (Lys-Gly) (interchain with G-Cter in ubiquitin) cross-links involve residues Lys-347 and Lys-408. Disordered regions lie at residues 591 to 620 (QRDTTLIRHSPQPSPSSSFNEGLLTGGHRH) and 677 to 743 (TQGW…LDPD). Residues 678–687 (QGWQSLSSSE) are compositionally biased toward polar residues. Phosphoserine is present on residues Ser-756 and Ser-759. Residues 773 to 776 (EILI) carry the PDZ-binding motif.

This sequence belongs to the angiomotin family. In terms of assembly, part of a complex composed of AMOTL2, MAGI1 and CDH5, within the complex AMOTL2 acts as a scaffold protein for the interaction of MAGI1 with CDH5. The complex is required for coupling actin fibers to cell junctions in endothelial cells. Within the complex AMOTL2 (via its N-terminus) interacts with CDH5. Interacts (via N-terminus) with MAGI1. Interacts (via N-terminus) with ACTB; the interaction facilitates binding of cell junction complexes to actin fibers in endothelial cells. Interacts with CDH1; the interaction may facilitate binding of radial actin fibers to cell junction complexes. Interacts with SRC. Interacts with YAP1; the interaction is required for ubiquitination of AMOTL2 and localization of YAP1 to tight junctions. Interacts with WWP1; the interaction facilitates WWP1 interaction with the Crumbs complex and subsequent WWP1 translocation to the plasma membrane. WPP1 interaction with the Crumbs complex promotes WPP1 monoubiquitination of AMOTL2 which subsequently activates the Hippo signaling pathway. When ubiquitinated interacts with LATS2 (via UBA domain); the interaction promotes LATS2 phosphorylation of YAP1. Interacts (via PPXY motif) with WWTR1/TAZ (via WW domain); the interaction promotes WWTR1/TAZ localization to the cytoplasm and thereby inhibition of its transcriptional properties. Interacts with PHLDB2; interaction may facilitate PHLDB2 localization to the myotube podosome cortex that surrounds the core. In terms of processing, monoubiquitinated at Lys-347 and Lys-408 by Crumbs complex-bound WWP1. De-ubiquitinated at Lys-347 and Lys-408 by USP9X; the interaction may be promoted by cell contact inhibition. Deubiquitination of AMOTL2 negatively regulates Hippo signaling activation. Post-translationally, phosphorylation at Tyr-107 is necessary for efficient binding to SRC and synergistically functioning with SRC to activate the downstream MAPK pathway.

Its subcellular location is the recycling endosome. The protein resides in the cytoplasm. The protein localises to the cell projection. It localises to the podosome. It is found in the cell junction. Regulates the translocation of phosphorylated SRC to peripheral cell-matrix adhesion sites. Required for proper architecture of actin filaments. Plays a role in coupling actin fibers to cell junctions in endothelial cells and is therefore required for correct endothelial cell morphology via facilitating transcellular transmission of mechanical force resulting in endothelial cell elongation. Required for the anchoring of radial actin fibers to CDH1 junction complexes at the cell membrane which facilitates organization of radial actin fiber structure and cellular response to contractile forces. This contributes to maintenance of cell area, size, shape, epithelial sheet organization and trophectoderm cell properties that facilitate blastocyst zona hatching. Inhibits the Wnt/beta-catenin signaling pathway, probably by recruiting CTNNB1 to recycling endosomes and hence preventing its translocation to the nucleus. Participates in angiogenesis. Activates the Hippo signaling pathway in response to cell contact inhibition via interaction with and ubiquitination by Crumbs complex-bound WWP1. Ubiquitinated AMOTL2 then interacts with LATS2 which in turn phosphorylates YAP1, excluding it from the nucleus and localizing it to the cytoplasm and tight junctions, therefore ultimately repressing YAP1-driven transcription of target genes. Acts to inhibit WWTR1/TAZ transcriptional coactivator activity via sequestering WWTR1/TAZ in the cytoplasm and at tight junctions. Regulates the size and protein composition of the podosome cortex and core at myofibril neuromuscular junctions. Selectively promotes FGF-induced MAPK activation through SRC. May play a role in the polarity, proliferation and migration of endothelial cells. The chain is Angiomotin-like protein 2 from Canis lupus familiaris (Dog).